The primary structure comprises 238 residues: Large ribosomal subunit protein uL2 (238 aa).

Residues 1–11 (MGKRLISQNRG) show a composition bias toward polar residues. 2 disordered regions span residues 1 to 22 (MGKR…APSH) and 202 to 223 (FGGG…APPG).

Belongs to the universal ribosomal protein uL2 family. In terms of assembly, part of the 50S ribosomal subunit. Forms a bridge to the 30S subunit in the 70S ribosome.

Its function is as follows. One of the primary rRNA binding proteins. Required for association of the 30S and 50S subunits to form the 70S ribosome, for tRNA binding and peptide bond formation. It has been suggested to have peptidyltransferase activity; this is somewhat controversial. Makes several contacts with the 16S rRNA in the 70S ribosome. This Methanosarcina mazei (strain ATCC BAA-159 / DSM 3647 / Goe1 / Go1 / JCM 11833 / OCM 88) (Methanosarcina frisia) protein is Large ribosomal subunit protein uL2.